The primary structure comprises 40 residues: Lucifensin (40 aa).

Disulfide bonds link C3/C30, C16/C36, and C20/C38.

Belongs to the invertebrate defensin family. Type 1 subfamily. Post-translationally, the disulfide bonds are essential for antimicrobial activity. Larval fat body, hemolymph and salivary glands (at protein level).

Its subcellular location is the secreted. Its function is as follows. Shows strong antibacterial activity against the Gram-positive bacterium M.luteus. Also shows antibacterial activity against the Gram-positive bacteria E.fecalis, S.aureus, S.carnosus, S.pneumoniae and S.pyogenes and against a number of methicillin-resistant S.aureus and glycopeptide-intermediate S.aureus isolates. Does not show antibacterial activity against Gram-negative bacteria or antifungal activity against C.utilis. Shows slight antifungal activity against C.albicans. The chain is Lucifensin from Lucilia cuprina (Green bottle fly).